The primary structure comprises 910 residues: MVSLLKKLIGSRNDRLLKQYRKLVTQINNLEPQIAALSDEALQAKTQEFRDRHAKGTSLDDLLPEAFAVVREAGKRVFGMRHFDAQLLGGIALHNGKIAEMRTGEGKTLMATLPVYLNAIAAKGVHVVTVNDYLARRDADWMGRLYRFLGMSTGVVVPQQPNEEKIAAYRADITYGTNNEFGFDYLRDNMEYRVEDRRQRGLAYAIVDEVDSILIDEARTPLIISGQAEDHTELYVRMNAVPPLLKRMAGEPKPHEPEPEGDYWVDEKSQQVHLSESGHESAEKILTRLGILPEGESLYDPRHIALMHHMMVALRAHTLFFLDQQYVIQDGEVVIVDEFTGRLMAGRRWSDGLHQAVEAKEGVKIQHENQTLASITFQNYFRMYEKLSGMTGTADTEAYEFQEIYSLETVIIPTNKPMQRKDQNDQVFRTSQEKYNAILNDIRDCHERGQPVLVGTTSIENSELLSGLLKKAKLPHEVLNAKQHAREAEIVAEAGKPGHITIATNMAGRGTDIVLGGSVEKQIDLIRADENLSEAEKTARIERVRQEWKPLNEQVKAAGGLRIIGTERHESRRIDNQLRGRAGRQGDPGSSRFYLSLEDPLMRIFAGDRVRAIMERLKLPEGEPIEAGMVTRSIETAQRKVEGRNFDIRKQLLEYDDVANDQRKVLYAQRNDVLEAKTIGASVENLRDAAVTELFRGFVPAESVEEQWDIAGLQQALASDWQLQLPLAEMVEAEPKLTDEELLERVLQAARDTYRSKSELVGEESWGQFERSIMLQSIDTHWREHLSALDYLRQGIHLRGYAQKNPKQEYKREAFELFSGMLDRIRDDVVRVLMTVRVQSTEQVAQAEAEAAQSHVQNVQFHHSDYDEALASEAAEAQEPVRNVLPKVGRNDACPCGSGKKYKQCHGKLT.

ATP-binding positions include Q86, 104–108 (GEGKT), and D512. Residues C894, C896, C905, and H906 each coordinate Zn(2+).

The protein belongs to the SecA family. Monomer and homodimer. Part of the essential Sec protein translocation apparatus which comprises SecA, SecYEG and auxiliary proteins SecDF-YajC and YidC. Zn(2+) is required as a cofactor.

Its subcellular location is the cell inner membrane. It is found in the cytoplasm. It carries out the reaction ATP + H2O + cellular proteinSide 1 = ADP + phosphate + cellular proteinSide 2.. In terms of biological role, part of the Sec protein translocase complex. Interacts with the SecYEG preprotein conducting channel. Has a central role in coupling the hydrolysis of ATP to the transfer of proteins into and across the cell membrane, serving both as a receptor for the preprotein-SecB complex and as an ATP-driven molecular motor driving the stepwise translocation of polypeptide chains across the membrane. In Bordetella avium (strain 197N), this protein is Protein translocase subunit SecA 1.